A 106-amino-acid polypeptide reads, in one-letter code: Putative regulatory protein MalR (106 aa).

The 95-residue stretch at 12 to 106 folds into the HTH hxlR-type domain; sequence CSIEYTLSFM…NLMHKWGQEN (95 aa).

Its function is as follows. Potential regulator of the malBH genes. The polypeptide is Putative regulatory protein MalR (malR) (Fusobacterium mortiferum).